The primary structure comprises 256 residues: MISAQNLVYSLQGRRLTDNVSLTFPGGEIVAILGPNGAGKSTLLRQLTGYLQPDSGECRLFNKPLNEWSITELAKHRAVMRQNSHMAFPFSVQEVIQMGRHPHRTGNQDNETAQIMALCDCQALANRDYRQLSGGEQQRVQLARLLVQLWEPTPSPKWLFLDEPTSALDIHHQQHLFRLLRQLVHERQFNVCCVLHDLNLAARYADRIVLMQKGKVIANGKPQDVLTQQELTMLYGADITVLEDPANHSPLIVLDH.

The ABC transporter domain maps to 2-238 (ISAQNLVYSL…QELTMLYGAD (237 aa)). Residue 34 to 41 (GPNGAGKS) participates in ATP binding.

Belongs to the ABC transporter superfamily. Heme (hemin) importer (TC 3.A.1.14.5) family. The complex is composed of two ATP-binding proteins (HmuV), two transmembrane proteins (HmuU) and a solute-binding protein (HmuT).

It localises to the cell inner membrane. In terms of biological role, part of the ABC transporter complex HmuTUV involved in hemin import. Responsible for energy coupling to the transport system. The polypeptide is Hemin import ATP-binding protein HmuV (Shigella dysenteriae).